Reading from the N-terminus, the 239-residue chain is Ribosomal RNA small subunit methyltransferase G (239 aa).

S-adenosyl-L-methionine contacts are provided by residues G77, F82, 128–129, and R147; that span reads AE. Residues 215–239 form a disordered region; it reads IRKTKSTPKKYPRKPGTPNKSPIEG. The segment covering 216–227 has biased composition (basic residues); it reads RKTKSTPKKYPR.

The protein belongs to the methyltransferase superfamily. RNA methyltransferase RsmG family.

The protein resides in the cytoplasm. Specifically methylates the N7 position of guanine in position 535 of 16S rRNA. This chain is Ribosomal RNA small subunit methyltransferase G, found in Bacillus velezensis (strain DSM 23117 / BGSC 10A6 / LMG 26770 / FZB42) (Bacillus amyloliquefaciens subsp. plantarum).